The primary structure comprises 153 residues: Endoribonuclease YbeY (153 aa).

Histidine 113, histidine 117, and histidine 123 together coordinate Zn(2+).

It belongs to the endoribonuclease YbeY family. The cofactor is Zn(2+).

The protein resides in the cytoplasm. Functionally, single strand-specific metallo-endoribonuclease involved in late-stage 70S ribosome quality control and in maturation of the 3' terminus of the 16S rRNA. The protein is Endoribonuclease YbeY of Aliivibrio salmonicida (strain LFI1238) (Vibrio salmonicida (strain LFI1238)).